The following is a 315-amino-acid chain: Malate dehydrogenase (315 aa).

9–15 (GGSGNVG) serves as a coordination point for NAD(+). R84 and R90 together coordinate substrate. Residues N97 and 120-122 (VSN) each bind NAD(+). Positions 122 and 153 each coordinate substrate. H177 (proton acceptor) is an active-site residue.

The protein belongs to the LDH/MDH superfamily.

The enzyme catalyses (S)-malate + NAD(+) = oxaloacetate + NADH + H(+). Its function is as follows. Catalyzes the reversible oxidation of malate to oxaloacetate. This Helicobacter hepaticus (strain ATCC 51449 / 3B1) protein is Malate dehydrogenase.